The sequence spans 677 residues: DNA ligase (677 aa).

NAD(+) contacts are provided by residues 38–42 (DYDFD), 87–88 (SL), and glutamate 121. Lysine 123 acts as the N6-AMP-lysine intermediate in catalysis. Positions 144, 187, 300, and 324 each coordinate NAD(+). The Zn(2+) site is built by cysteine 418, cysteine 421, cysteine 436, and cysteine 442. The BRCT domain occupies 601–677 (LINSNFEGLS…ISEEEFEAML (77 aa)).

Belongs to the NAD-dependent DNA ligase family. LigA subfamily. It depends on Mg(2+) as a cofactor. Mn(2+) serves as cofactor.

It carries out the reaction NAD(+) + (deoxyribonucleotide)n-3'-hydroxyl + 5'-phospho-(deoxyribonucleotide)m = (deoxyribonucleotide)n+m + AMP + beta-nicotinamide D-nucleotide.. DNA ligase that catalyzes the formation of phosphodiester linkages between 5'-phosphoryl and 3'-hydroxyl groups in double-stranded DNA using NAD as a coenzyme and as the energy source for the reaction. It is essential for DNA replication and repair of damaged DNA. This chain is DNA ligase, found in Chlorobium luteolum (strain DSM 273 / BCRC 81028 / 2530) (Pelodictyon luteolum).